A 263-amino-acid chain; its full sequence is uncharacterized protein (263 aa).

It to B.subtilis soj.

This is an uncharacterized protein from Pseudomonas putida (strain ATCC 47054 / DSM 6125 / CFBP 8728 / NCIMB 11950 / KT2440).